Here is a 671-residue protein sequence, read N- to C-terminus: Protein KHNYN (671 aa).

Disordered regions lie at residues 234 to 274, 294 to 327, 344 to 402, and 577 to 626; these read RVAG…LSGE, EVAP…AHVP, HNGS…GGNL, and GPTL…RKTR. A compositionally biased stretch (basic and acidic residues) spans 250 to 272; it reads TVEKEERKQDAVRDMGSGRKELS. Over residues 351–365 the composition is skewed to pro residues; sequence PRVPSPPPAPEPPWP. S355 is modified (phosphoserine). Basic and acidic residues predominate over residues 367–381; the sequence is GDRDRDRDRGDRGDK. Residues 430–582 enclose the RNase NYN domain; that stretch reads LRHIVIDGSN…LGRNGPTLDE (153 aa). Residues 591-612 show a composition bias toward polar residues; that stretch reads QGSSKTQQPSKGSTEQANQQQG.

Belongs to the N4BP1 family.

The sequence is that of Protein KHNYN (Khnyn) from Mus musculus (Mouse).